Reading from the N-terminus, the 248-residue chain is MSIAASVIAHIAPVPAQAYAHPMPSNRWSEMARGVAADESARPAQVVAALGTPAVFARNSEIFGDDQVAENVYVVVSGVVRICKLMGDGRRQIEAFCLPGDAFGWETGERYRFSAEAVSECRLVRVKRSVLFARAGSDPELACALWALSFAELQRAQEHLLLLGRKTAQERVGSFLLDLARRSGTTNASHVTEVTLAMSRQDIADFLGLTIETVSRTLTYLEEQGTISLPSSRRVLLRDRSALRRLDS.

The 76-residue stretch at 166-241 (KTAQERVGSF…SRRVLLRDRS (76 aa)) folds into the HTH crp-type domain. A DNA-binding region (H-T-H motif) is located at residues 200–219 (RQDIADFLGLTIETVSRTLT).

Its function is as follows. FixK is a protein that regulates nitrogen fixation genes both positively and negatively. FixK is a positive regulator of NifA expression. FixK may bind DNA at the FNR consensus binding site. In Azorhizobium caulinodans (strain ATCC 43989 / DSM 5975 / JCM 20966 / LMG 6465 / NBRC 14845 / NCIMB 13405 / ORS 571), this protein is Nitrogen fixation regulation protein FixK (fixK).